The chain runs to 88 residues: Small ribosomal subunit protein uS15 (88 aa).

It belongs to the universal ribosomal protein uS15 family. As to quaternary structure, part of the 30S ribosomal subunit. Forms a bridge to the 50S subunit in the 70S ribosome, contacting the 23S rRNA.

Its function is as follows. One of the primary rRNA binding proteins, it binds directly to 16S rRNA where it helps nucleate assembly of the platform of the 30S subunit by binding and bridging several RNA helices of the 16S rRNA. Functionally, forms an intersubunit bridge (bridge B4) with the 23S rRNA of the 50S subunit in the ribosome. The chain is Small ribosomal subunit protein uS15 from Borrelia garinii subsp. bavariensis (strain ATCC BAA-2496 / DSM 23469 / PBi) (Borreliella bavariensis).